The chain runs to 278 residues: Bis(5'-nucleosyl)-tetraphosphatase, symmetrical (278 aa).

Belongs to the Ap4A hydrolase family.

It catalyses the reaction P(1),P(4)-bis(5'-adenosyl) tetraphosphate + H2O = 2 ADP + 2 H(+). Its function is as follows. Hydrolyzes diadenosine 5',5'''-P1,P4-tetraphosphate to yield ADP. This is Bis(5'-nucleosyl)-tetraphosphatase, symmetrical from Buchnera aphidicola subsp. Baizongia pistaciae (strain Bp).